A 700-amino-acid polypeptide reads, in one-letter code: Elongation factor G (700 aa).

The 281-residue stretch at 6-286 (HKVRNIGIMA…AVIDYLPSPL (281 aa)) folds into the tr-type G domain. GTP contacts are provided by residues 15–22 (AHIDAGKT), 79–83 (DTPGH), and 133–136 (NKMD).

It belongs to the TRAFAC class translation factor GTPase superfamily. Classic translation factor GTPase family. EF-G/EF-2 subfamily.

The protein localises to the cytoplasm. Functionally, catalyzes the GTP-dependent ribosomal translocation step during translation elongation. During this step, the ribosome changes from the pre-translocational (PRE) to the post-translocational (POST) state as the newly formed A-site-bound peptidyl-tRNA and P-site-bound deacylated tRNA move to the P and E sites, respectively. Catalyzes the coordinated movement of the two tRNA molecules, the mRNA and conformational changes in the ribosome. This chain is Elongation factor G, found in Leifsonia xyli subsp. xyli (strain CTCB07).